Here is a 349-residue protein sequence, read N- to C-terminus: 1-acylglycerol-3-phosphate O-acyltransferase ABHD5 (349 aa).

Residue Ala-2 is modified to N-acetylalanine. The region spanning 77–184 (PLVLLHGFGG…LVEPWGFPER (108 aa)) is the AB hydrolase-1 domain. Ser-122 is modified (phosphoserine). Residues 327–332 (HYVYAD) carry the HXXXXD motif motif.

It belongs to the peptidase S33 family. ABHD4/ABHD5 subfamily. In terms of assembly, interacts with ADRP, PLIN and PNPLA2. Interacts with PLIN5; promotes interaction with PNPLA2. As to expression, widely expressed in various tissues, including lymphocytes, liver, skeletal muscle and brain. Expressed by upper epidermal layers and dermal fibroblasts in skin, hepatocytes and neurons (at protein level).

The protein localises to the cytoplasm. It is found in the lipid droplet. It localises to the cytosol. It catalyses the reaction a 1-acyl-sn-glycero-3-phosphate + an acyl-CoA = a 1,2-diacyl-sn-glycero-3-phosphate + CoA. The enzyme catalyses 1-(9Z-octadecenoyl)-sn-glycero-3-phosphate + hexadecanoyl-CoA = 1-(9Z)-octadecenoyl-2-hexadecanoyl-sn-glycero-3-phosphate + CoA. The catalysed reaction is 1-(9Z-octadecenoyl)-sn-glycero-3-phosphate + octadecanoyl-CoA = 1-(9Z-octadecenoyl)-2-octadecanoyl-sn-glycero-3-phosphate + CoA. It carries out the reaction 1-(9Z-octadecenoyl)-sn-glycero-3-phosphate + (9Z)-octadecenoyl-CoA = 1,2-di-(9Z-octadecenoyl)-sn-glycero-3-phosphate + CoA. It catalyses the reaction 1-(9Z-octadecenoyl)-sn-glycero-3-phosphate + (5Z,8Z,11Z,14Z)-eicosatetraenoyl-CoA = 1-(9Z)-octadecenoyl-2-(5Z,8Z,11Z,14Z)-eicosatetraenoyl-sn-glycero-3-phosphate + CoA. The enzyme catalyses eicosanoyl-CoA + 1-(9Z-octadecenoyl)-sn-glycero-3-phosphate = 1-(9Z)-octadecenoyl-2-eicosanoyl-sn-glycero-3-phosphate + CoA. The catalysed reaction is 1-hexadecanoyl-sn-glycero-3-phosphate + (9Z)-octadecenoyl-CoA = 1-hexadecanoyl-2-(9Z-octadecenoyl)-sn-glycero-3-phosphate + CoA. It carries out the reaction 1-octadecanoyl-sn-glycero-3-phosphate + (9Z)-octadecenoyl-CoA = 1-octadecanoyl-2-(9Z-octadecenoyl)-sn-glycero-3-phosphate + CoA. It catalyses the reaction 1-(5Z,8Z,11Z,14Z-eicosatetraenoyl)-sn-glycero-3-phosphate + (9Z)-octadecenoyl-CoA = 1-(5Z,8Z,11Z,14Z)-eicosatetraenoyl-2-(9Z)-octadecenoyl-sn-glycero-3-phosphate + CoA. With respect to regulation, acyltransferase activity is inhibited by detergents such as Triton X-100 and 3-[(3-cholamidopropyl)dimethylammonio]-1-propanesulfonate (CHAPS). Acyltransferase activity is inhibited by the presence of magnesium and calcium. Coenzyme A-dependent lysophosphatidic acid acyltransferase that catalyzes the transfer of an acyl group on a lysophosphatidic acid. Functions preferentially with 1-oleoyl-lysophosphatidic acid followed by 1-palmitoyl-lysophosphatidic acid, 1-stearoyl-lysophosphatidic acid and 1-arachidonoyl-lysophosphatidic acid as lipid acceptor. Functions preferentially with arachidonoyl-CoA followed by oleoyl-CoA as acyl group donors. Functions in phosphatidic acid biosynthesis. May regulate the cellular storage of triacylglycerol through activation of the phospholipase PNPLA2. Involved in keratinocyte differentiation. Regulates lipid droplet fusion. The polypeptide is 1-acylglycerol-3-phosphate O-acyltransferase ABHD5 (Homo sapiens (Human)).